We begin with the raw amino-acid sequence, 108 residues long: L-rhamnose mutarotase (108 aa).

Y19 lines the substrate pocket. The active-site Proton donor is the H23. Residues Y45 and W80 to W81 contribute to the substrate site.

Belongs to the rhamnose mutarotase family. Homodimer.

The protein localises to the cytoplasm. It catalyses the reaction alpha-L-rhamnose = beta-L-rhamnose. It participates in carbohydrate metabolism; L-rhamnose metabolism. In terms of biological role, involved in the anomeric conversion of L-rhamnose. The chain is L-rhamnose mutarotase from Ligilactobacillus salivarius (strain UCC118) (Lactobacillus salivarius).